The primary structure comprises 201 residues: Putative pseudouridine methyltransferase (201 aa).

S-adenosyl-L-methionine-binding residues include Met132 and Cys186.

Belongs to the methyltransferase superfamily. TrmY family.

The protein localises to the cytoplasm. The chain is Putative pseudouridine methyltransferase from Vibrio cholerae serotype O1 (strain ATCC 39315 / El Tor Inaba N16961).